Here is an 82-residue protein sequence, read N- to C-terminus: High-potential iron-sulfur protein (82 aa).

Residues C42, C45, C60, and C74 each contribute to the [4Fe-4S] cluster site.

This sequence belongs to the high-potential iron-sulfur protein (HiPIP) family. Homodimer.

It localises to the periplasm. Its function is as follows. Specific class of high-redox-potential 4Fe-4S ferredoxins. Functions in anaerobic electron transport in most purple and in some other photosynthetic bacteria and in at least one genus (Paracoccus) of halophilic, denitrifying bacteria. This chain is High-potential iron-sulfur protein (hip), found in Marichromatium purpuratum (Chromatium purpuratum).